We begin with the raw amino-acid sequence, 1350 residues long: MAAAVELTGDGGTTAETRWLSPPLTHDDNRGFLQMLREKKERLGVGAAKVEVRLEKLTVEADVRVGRRAVPTLLNCAINAAQELAACAHMCTTRKKPMKIINEATGTIRPSRMTLLLGAPGSGKTTLLKALAGKLDSSLKMKGKVTYNGEEVNSSTPQYLHAYVSQYDLHHAEMTVRETIDFSSKMLGTNNEFEMLGEAIRRKKGVINRVDQELDSFIKATTFGEGSNLTTNYIIKILGLSECADTLVGDEMRRGISGGQKKRATIGEMLVGLARCFFMDDISTGLDSSTTFEIMKFLQQMAHLMDLTMVISLLQPPPETLELFDDIILLCEGQIVYHGPRENATDFFETMGFKCPSRKNVADFLQEVTSKMDQKQYWIGNANKYQYHSIEKFAESFRTSYLPRLVENDHFESTNAGKSKEVKTSTSRMISSWNIFKACFSREVLLLKRNSPVHIFKTIQITVLALVISTLFLRTNMRHDTVLDANKYMGALFMAVVIVNFNGMTEIAMTIKRLPIFYKQREILALPGWALLSSVFLLSLPISFVETGLWTGLTYYVIGYAPSFVRFIQHFVVLFAMHQMSMSLYRFLAAIGRTQVMANMLGTAALIAIYILGGFVISKDNLQPWLRWGYWTSPFTYAQNAVALNEFLDDRWATEFHFANANTVGETILKVRGLLTEWHWYWICVSILFGFSLVFNILSIFALQYMRSPHKHQVNINATKVKVDYNSQIVGNGTASTDQVILPFQPLSLVFDHINYFVDMPKEMTKYGVTDKKLQLLQDVSGAFRPGVLTALMGITGAGKTTLLDVLAGRKTGGYIEGTVKIAGYPKKQETFSRISGYCEQSDIHSPNLTVYESLQFSAWLRLPSNVKSHQRNMFIDEVMDLVELTGLKNAMVGLAGATGLSAEQRKRLTIAVELVASPSIIFMDEPTTGLDARAAAIVMRTVRKTVDTGRTVVCTIHQPSIEIFESFDELLLMKRGGQLIYSGSLGPLSSNMIKYFEAIPGVPRIKEGQNPAAWMLDISSRTAEYEIGVDYAEIYQRSSLYWENRQLIDDLGKPEPNTEDLHFPPKYWQDFRAQCMACLWKQNCAYWKNSEHNVVRFINTFAVSIMFGIVFWKIGSTIKDEQDVFNILGVVYGSALFLGFMNCSILQPVVGMERVVLYREKAAGMYSTMAYAIAQVAVELPYMFVQVFIFSAIVYPMIGFQMTATKFFWFALYMVLSFLYYTLYGMMTVALTPNIEIAAGLSFLIFIFWNVFSGFIIGRQMIPVWWRWVYWANPAAWTVYGLMFSQLGDRTELIQVPGQPEQTVKEFLEGYLGLQDRYFNLVTSLHVAIIALFTFLFFLSIKHLKFQRR.

The segment at 1–23 (MAAAVELTGDGGTTAETRWLSPP) is disordered. The ABC transporter 1 domain occupies 85–357 (AACAHMCTTR…FETMGFKCPS (273 aa)). 118–125 (GAPGSGKT) is a binding site for ATP. The ABC transmembrane type-2 1 domain maps to 434–647 (NIFKACFSRE…AQNAVALNEF (214 aa)). The next 6 membrane-spanning stretches (helical) occupy residues 453-473 (VHIF…TLFL), 491-511 (ALFM…AMTI), 523-543 (ILAL…LPIS), 557-577 (VIGY…LFAM), 597-617 (MANM…GFVI), and 683-703 (ICVS…IFAL). Residues 749–1001 (LVFDHINYFV…NMIKYFEAIP (253 aa)) form the ABC transporter 2 domain. 794-801 (GITGAGKT) lines the ATP pocket. The region spanning 1074 to 1288 (AQCMACLWKQ…TVYGLMFSQL (215 aa)) is the ABC transmembrane type-2 2 domain. A run of 7 helical transmembrane segments spans residues 1099-1119 (INTF…GSTI), 1126-1146 (FNIL…NCSI), 1181-1201 (LPYM…MIGF), 1208-1228 (FFWF…YGMM), 1238-1258 (IAAG…GFII), 1269-1289 (WVYW…SQLG), and 1322-1342 (LVTS…FLSI).

This sequence belongs to the ABC transporter superfamily. ABCG family. PDR (TC 3.A.1.205) subfamily.

Its subcellular location is the membrane. Its function is as follows. May be a general defense protein. This chain is ABC transporter G family member 45, found in Oryza sativa subsp. japonica (Rice).